Reading from the N-terminus, the 196-residue chain is Rho-related protein racL (196 aa).

Gly10–Thr17 serves as a coordination point for GTP. The Effector region signature appears at Tyr32–Phe40. GTP is bound by residues Asp57–Gln61 and Thr116–Asp119. Cys193 carries the post-translational modification Cysteine methyl ester. Cys193 is lipidated: S-geranylgeranyl cysteine. Positions Ile194–Leu196 are cleaved as a propeptide — removed in mature form.

This sequence belongs to the small GTPase superfamily. Rho family.

Its subcellular location is the cell membrane. The polypeptide is Rho-related protein racL (racL) (Dictyostelium discoideum (Social amoeba)).